The following is a 520-amino-acid chain: Cyclic AMP-responsive element-binding protein 3-like protein 2 (520 aa).

Over Met1–Cys379 the chain is Cytoplasmic. Ser93 is modified (phosphoserine). Lys178 participates in a covalent cross-link: Glycyl lysine isopeptide (Lys-Gly) (interchain with G-Cter in SUMO2). The residue at position 191 (Ser191) is a Phosphoserine. Residues Ala195–Leu264 are disordered. Composition is skewed to low complexity over residues Ser208–Pro220 and Ser234–Pro255. The region spanning Ala294 to Leu357 is the bZIP domain. Positions Lys296–Lys325 are basic motif. The tract at residues Leu336–Leu357 is leucine-zipper. The helical; Signal-anchor for type II membrane protein transmembrane segment at Leu380 to Pro400 threads the bilayer. The Lumenal segment spans residues Tyr401–Phe520. The S1P recognition signature appears at Arg427 to Leu430. Residues Asn480, Asn504, and Asn517 are each glycosylated (N-linked (GlcNAc...) asparagine).

This sequence belongs to the bZIP family. ATF subfamily. Binds DNA as a dimer. In terms of processing, upon ER stress, translocated to the Golgi apparatus, where it is processed by regulated intramembrane proteolysis (RIP) to release the cytosol-facing N-terminal transcription factor domain. The cleavage is performed sequentially by site-1 and site-2 proteases (S1P/MBTPS1 and S2P/MBTPS2). Post-translationally, N-glycosylated. Ubiquitinated by HRD1/SYVN1; undergoes 'Lys-48'-linked ubiquitination, followed by rapid proteasomal degradation under normal conditions. Upon ER stress, SYVN1 E3 ubiquitin-protein ligase dissociates from its substrate, ubiquitination does not occur and CREB3L2 is stabilized. In terms of tissue distribution, widely expressed with highest levels in placenta, lung, spleen and intestine, and lowest levels in heart, brain, skeletal muscle, thymus, colon and leukocytes. In fetal tissues, the weakest expression is detected in brain and heart.

It localises to the endoplasmic reticulum membrane. The protein localises to the nucleus. In terms of biological role, transcription factor involved in unfolded protein response (UPR). In the absence of endoplasmic reticulum (ER) stress, inserted into ER membranes, with N-terminal DNA-binding and transcription activation domains oriented toward the cytosolic face of the membrane. In response to ER stress, transported to the Golgi, where it is cleaved in a site-specific manner by resident proteases S1P/MBTPS1 and S2P/MBTPS2. The released N-terminal cytosolic domain is translocated to the nucleus to effect transcription of specific target genes. Plays a critical role in chondrogenesis by activating the transcription of SEC23A, which promotes the transport and secretion of cartilage matrix proteins, and possibly that of ER biogenesis-related genes. In a neuroblastoma cell line, protects cells from ER stress-induced death. In vitro activates transcription of target genes via direct binding to the CRE site. In Homo sapiens (Human), this protein is Cyclic AMP-responsive element-binding protein 3-like protein 2 (CREB3L2).